Reading from the N-terminus, the 319-residue chain is HPr kinase/phosphorylase (319 aa).

Active-site residues include histidine 137 and lysine 158. 152–159 (GDSGVGKS) lines the ATP pocket. Residue serine 159 coordinates Mg(2+). The active-site Proton acceptor; for phosphorylation activity. Proton donor; for dephosphorylation activity is the aspartate 176. The important for the catalytic mechanism of both phosphorylation and dephosphorylation stretch occupies residues 201–210 (MEIRGLGIIN). Glutamate 202 provides a ligand contact to Mg(2+). The active site involves arginine 243. The tract at residues 264–269 (PVRPGR) is important for the catalytic mechanism of dephosphorylation.

It belongs to the HPrK/P family. As to quaternary structure, homohexamer. Mg(2+) serves as cofactor.

The catalysed reaction is [HPr protein]-L-serine + ATP = [HPr protein]-O-phospho-L-serine + ADP + H(+). The enzyme catalyses [HPr protein]-O-phospho-L-serine + phosphate + H(+) = [HPr protein]-L-serine + diphosphate. Catalyzes the ATP- as well as the pyrophosphate-dependent phosphorylation of a specific serine residue in HPr, a phosphocarrier protein of the phosphoenolpyruvate-dependent sugar phosphotransferase system (PTS). HprK/P also catalyzes the pyrophosphate-producing, inorganic phosphate-dependent dephosphorylation (phosphorolysis) of seryl-phosphorylated HPr (P-Ser-HPr). This is HPr kinase/phosphorylase from Treponema pallidum subsp. pallidum (strain SS14).